We begin with the raw amino-acid sequence, 340 residues long: Phosphate acyltransferase (340 aa).

This sequence belongs to the PlsX family. In terms of assembly, homodimer. Probably interacts with PlsY.

It is found in the cytoplasm. The enzyme catalyses a fatty acyl-[ACP] + phosphate = an acyl phosphate + holo-[ACP]. It participates in lipid metabolism; phospholipid metabolism. In terms of biological role, catalyzes the reversible formation of acyl-phosphate (acyl-PO(4)) from acyl-[acyl-carrier-protein] (acyl-ACP). This enzyme utilizes acyl-ACP as fatty acyl donor, but not acyl-CoA. This Nitrosococcus oceani (strain ATCC 19707 / BCRC 17464 / JCM 30415 / NCIMB 11848 / C-107) protein is Phosphate acyltransferase.